Consider the following 93-residue polypeptide: uncharacterized protein (93 aa).

It belongs to the BolA/IbaG family.

This is an uncharacterized protein from Sinorhizobium sp.